The chain runs to 130 residues: Lysozyme C (130 aa).

The C-type lysozyme domain occupies 1 to 130; the sequence is KVWERCALAR…VEQYVEGCDL (130 aa). 4 disulfides stabilise this stretch: C6/C128, C30/C116, C65/C81, and C77/C95. Catalysis depends on residues E35 and D53.

This sequence belongs to the glycosyl hydrolase 22 family. As to quaternary structure, monomer.

The catalysed reaction is Hydrolysis of (1-&gt;4)-beta-linkages between N-acetylmuramic acid and N-acetyl-D-glucosamine residues in a peptidoglycan and between N-acetyl-D-glucosamine residues in chitodextrins.. Its function is as follows. Lysozymes have primarily a bacteriolytic function; those in tissues and body fluids are associated with the monocyte-macrophage system and enhance the activity of immunoagents. In Camelus dromedarius (Dromedary), this protein is Lysozyme C (LYZ).